The chain runs to 337 residues: MNKQDFYFDLPSELIAQYPLANRSDSRLLIYNRQTEEYGHYQFREIADFLQPGDLLVMNDSKVIPARLYGHKATGGKVELLVERITGDFTFLAHIKASKSLKSNDFIYLDAGKRLEVLERQDDLFLCKASENILDLLNDLGHIPLPPYIAREDESLDKERYQTVYAKCAGSVAAPTAGLHFDDAVLSSIRARGVNIAYVTLHVGAGTFRPVRCERIQDHKMHSEWFTVSPDLCAAVKAAKSMGNRVIAVGTTALRSLESAAMGGELIPCSRDTDIFIYPGYQFKVCDGLITNFHLPESTLVMLVSAFIGHQECMALYQEAIDKRYRFFSYGDASLLL.

It belongs to the QueA family. In terms of assembly, monomer.

It is found in the cytoplasm. The catalysed reaction is 7-aminomethyl-7-carbaguanosine(34) in tRNA + S-adenosyl-L-methionine = epoxyqueuosine(34) in tRNA + adenine + L-methionine + 2 H(+). It functions in the pathway tRNA modification; tRNA-queuosine biosynthesis. Functionally, transfers and isomerizes the ribose moiety from AdoMet to the 7-aminomethyl group of 7-deazaguanine (preQ1-tRNA) to give epoxyqueuosine (oQ-tRNA). The protein is S-adenosylmethionine:tRNA ribosyltransferase-isomerase of Legionella pneumophila (strain Corby).